The primary structure comprises 90 residues: Putative protein p49 (90 aa).

The chain is Putative protein p49 (49) from Escherichia coli (Bacteriophage APSE-1).